Reading from the N-terminus, the 176-residue chain is RNA pyrophosphohydrolase (176 aa).

In terms of domain architecture, Nudix hydrolase spans 6–149; that stretch reads GYRPNVGIVI…KRDVYRRVMK (144 aa). Positions 38 to 59 match the Nudix box motif; sequence GGINPGESAEQAMYRELFEEVG.

This sequence belongs to the Nudix hydrolase family. RppH subfamily. A divalent metal cation serves as cofactor.

Functionally, accelerates the degradation of transcripts by removing pyrophosphate from the 5'-end of triphosphorylated RNA, leading to a more labile monophosphorylated state that can stimulate subsequent ribonuclease cleavage. The protein is RNA pyrophosphohydrolase of Escherichia fergusonii (strain ATCC 35469 / DSM 13698 / CCUG 18766 / IAM 14443 / JCM 21226 / LMG 7866 / NBRC 102419 / NCTC 12128 / CDC 0568-73).